We begin with the raw amino-acid sequence, 305 residues long: Protoheme IX farnesyltransferase (305 aa).

9 consecutive transmembrane segments (helical) span residues 29-49 (LIVF…PGLA), 55-75 (LWAT…NCLI), 101-121 (ALIF…EAVN), 123-143 (LTAW…TVVL), 151-171 (IVIG…AMTG), 177-197 (GLIL…ALAL), 219-241 (FTRL…PFVQ), 246-268 (WLYL…RLWR), and 283-303 (IWHL…QDLL).

Belongs to the UbiA prenyltransferase family. Protoheme IX farnesyltransferase subfamily.

The protein localises to the cell inner membrane. It carries out the reaction heme b + (2E,6E)-farnesyl diphosphate + H2O = Fe(II)-heme o + diphosphate. Its pathway is porphyrin-containing compound metabolism; heme O biosynthesis; heme O from protoheme: step 1/1. Its function is as follows. Converts heme B (protoheme IX) to heme O by substitution of the vinyl group on carbon 2 of heme B porphyrin ring with a hydroxyethyl farnesyl side group. The sequence is that of Protoheme IX farnesyltransferase from Leptothrix cholodnii (strain ATCC 51168 / LMG 8142 / SP-6) (Leptothrix discophora (strain SP-6)).